Reading from the N-terminus, the 237-residue chain is Ribosomal RNA small subunit methyltransferase G (237 aa).

S-adenosyl-L-methionine is bound by residues G78, F83, 129–130 (AE), and R148. The disordered stretch occupies residues 216–237 (SKKKETPNKYPRKAGTPNKKPL).

Belongs to the methyltransferase superfamily. RNA methyltransferase RsmG family.

It localises to the cytoplasm. In terms of biological role, specifically methylates the N7 position of a guanine in 16S rRNA. This is Ribosomal RNA small subunit methyltransferase G from Streptococcus agalactiae serotype III (strain NEM316).